The chain runs to 167 residues: MPLLDSFKVDHTIMPAPAVRRAKGMKTPSGDDITVFDLRFVAPNKEILSSEGIHTLEHLFAGFMRDHLNSKDVEIIDISPMGCRTGFYMSLIGSPDEQRVADAWSASMQDILGVKEQKDIPELNVYQCGTYKMHSLEDAKEIASKVLERRIGVMDNDALALDESKIG.

Fe cation contacts are provided by His-54, His-58, and Cys-128.

It belongs to the LuxS family. As to quaternary structure, homodimer. The cofactor is Fe cation.

The catalysed reaction is S-(5-deoxy-D-ribos-5-yl)-L-homocysteine = (S)-4,5-dihydroxypentane-2,3-dione + L-homocysteine. In terms of biological role, involved in the synthesis of autoinducer 2 (AI-2) which is secreted by bacteria and is used to communicate both the cell density and the metabolic potential of the environment. The regulation of gene expression in response to changes in cell density is called quorum sensing. Catalyzes the transformation of S-ribosylhomocysteine (RHC) to homocysteine (HC) and 4,5-dihydroxy-2,3-pentadione (DPD). The protein is S-ribosylhomocysteine lyase of Sulfurimonas denitrificans (strain ATCC 33889 / DSM 1251) (Thiomicrospira denitrificans (strain ATCC 33889 / DSM 1251)).